Consider the following 215-residue polypeptide: Transmembrane protein 267 (215 aa).

A run of 3 helical transmembrane segments spans residues 77–97 (FCEV…HFFL), 114–134 (PLHC…LMQL), and 178–198 (YWLY…IMCL).

It is found in the membrane. The sequence is that of Transmembrane protein 267 (tmem267) from Xenopus laevis (African clawed frog).